Consider the following 488-residue polypeptide: 3-octaprenyl-4-hydroxybenzoate carboxy-lyase (488 aa).

Asparagine 172 is a Mn(2+) binding site. Prenylated FMN-binding positions include 175–177 (IYR), 189–191 (RWL), and 194–195 (RG). Glutamate 238 lines the Mn(2+) pocket. The Proton donor role is filled by aspartate 287.

The protein belongs to the UbiD family. In terms of assembly, homohexamer. Requires prenylated FMN as cofactor. It depends on Mn(2+) as a cofactor.

The protein resides in the cell membrane. It carries out the reaction a 4-hydroxy-3-(all-trans-polyprenyl)benzoate + H(+) = a 2-(all-trans-polyprenyl)phenol + CO2. The protein operates within cofactor biosynthesis; ubiquinone biosynthesis. In terms of biological role, catalyzes the decarboxylation of 3-octaprenyl-4-hydroxy benzoate to 2-octaprenylphenol, an intermediate step in ubiquinone biosynthesis. This is 3-octaprenyl-4-hydroxybenzoate carboxy-lyase from Pseudomonas putida (strain ATCC 47054 / DSM 6125 / CFBP 8728 / NCIMB 11950 / KT2440).